We begin with the raw amino-acid sequence, 354 residues long: Probable N-acetylmuramoyl-L-alanine amidase (354 aa).

An N-terminal signal peptide occupies residues Met1 to Ala39. Residues Leu40 to Thr152 enclose the N-acetylmuramoyl-L-alanine amidase domain.

It belongs to the N-acetylmuramoyl-L-alanine amidase 2 family.

The protein localises to the secreted. The catalysed reaction is Hydrolyzes the link between N-acetylmuramoyl residues and L-amino acid residues in certain cell-wall glycopeptides.. This is Probable N-acetylmuramoyl-L-alanine amidase from Bacillus licheniformis.